The following is an 82-amino-acid chain: Sec-independent protein translocase protein TatA (82 aa).

A helical transmembrane segment spans residues 1–21; it reads MGGISIWQLLIIAVIIVLLFG. Positions 48 to 82 are disordered; sequence SAKDAKKDADFVPQNLEKKEAETVEKQKQNDKEQA.

It belongs to the TatA/E family. As to quaternary structure, the Tat system comprises two distinct complexes: a TatABC complex, containing multiple copies of TatA, TatB and TatC subunits, and a separate TatA complex, containing only TatA subunits. Substrates initially bind to the TatABC complex, which probably triggers association of the separate TatA complex to form the active translocon.

Its subcellular location is the cell inner membrane. In terms of biological role, part of the twin-arginine translocation (Tat) system that transports large folded proteins containing a characteristic twin-arginine motif in their signal peptide across membranes. TatA could form the protein-conducting channel of the Tat system. This chain is Sec-independent protein translocase protein TatA, found in Aliivibrio salmonicida (strain LFI1238) (Vibrio salmonicida (strain LFI1238)).